The following is a 264-amino-acid chain: Intermembrane phospholipid transport system ATP-binding protein MlaF (264 aa).

Residues 6-242 (IEVKNLTFKR…QDLRVVQFLK (237 aa)) form the ABC transporter domain. 38 to 45 (GPSGIGKT) is a binding site for ATP.

The protein belongs to the ABC transporter superfamily. MlaF family. In terms of assembly, the complex is composed of two ATP-binding proteins (MlaF), two transmembrane proteins (MlaE), two cytoplasmic solute-binding proteins (MlaB) and six periplasmic solute-binding proteins (MlaD).

The protein localises to the cell inner membrane. Part of the ABC transporter complex MlaFEDB, which is involved in a phospholipid transport pathway that maintains lipid asymmetry in the outer membrane by retrograde trafficking of phospholipids from the outer membrane to the inner membrane. Responsible for energy coupling to the transport system. This is Intermembrane phospholipid transport system ATP-binding protein MlaF from Haemophilus influenzae (strain ATCC 51907 / DSM 11121 / KW20 / Rd).